We begin with the raw amino-acid sequence, 329 residues long: DNA-directed RNA polymerase subunit alpha (329 aa).

The alpha N-terminal domain (alpha-NTD) stretch occupies residues 1–235 (MQNSIIGFLK…EQLEAFVDLR (235 aa)). Positions 249–329 (FEPILLRPVD…KWPPSSILEE (81 aa)) are alpha C-terminal domain (alpha-CTD).

The protein belongs to the RNA polymerase alpha chain family. As to quaternary structure, homodimer. The RNAP catalytic core consists of 2 alpha, 1 beta, 1 beta' and 1 omega subunit. When a sigma factor is associated with the core the holoenzyme is formed, which can initiate transcription.

It carries out the reaction RNA(n) + a ribonucleoside 5'-triphosphate = RNA(n+1) + diphosphate. DNA-dependent RNA polymerase catalyzes the transcription of DNA into RNA using the four ribonucleoside triphosphates as substrates. This chain is DNA-directed RNA polymerase subunit alpha, found in Buchnera aphidicola subsp. Schizaphis graminum (strain Sg).